Here is a 153-residue protein sequence, read N- to C-terminus: Small ribosomal subunit protein uS9 (153 aa).

Residues 122–153 are disordered; the sequence is KKAGFLTRDPRSTERKKYGLKKARKAPQYSKR. The span at 129–138 shows a compositional bias: basic and acidic residues; sequence RDPRSTERKK. Positions 139–153 are enriched in basic residues; that stretch reads YGLKKARKAPQYSKR.

It belongs to the universal ribosomal protein uS9 family.

This chain is Small ribosomal subunit protein uS9 (rpsI), found in Mycobacterium leprae (strain TN).